Here is a 762-residue protein sequence, read N- to C-terminus: cGMP-dependent protein kinase 2 (762 aa).

Positions 1-25 (MGNGSVKPKHSKHPDGQSGNLSNEA) are disordered. A lipid anchor (N-myristoyl glycine) is attached at Gly-2. Residues Ser-110 and Ser-117 each carry the phosphoserine modification. The tract at residues 112–138 (LVSLHSRRGAKAGVSAEPTSRTYDLNK) is disordered. The segment at 168-283 (FLKRLDPQQI…DEEYRNFLRS (116 aa)) is cGMP-binding, high affinity; cAMP-binding, moderate affinity. 3',5'-cyclic GMP is bound by residues 232 to 235 (GELA), 242 to 243 (RT), Lys-347, 356 to 359 (GEKA), 366 to 367 (RS), Asp-412, and Arg-415. Residues 286–416 (LLKNLPEDKL…TLNRDDEKRH (131 aa)) form a cGMP-binding, high affinity; cAMP-binding, low affinity region. Ser-431 bears the Phosphoserine mark. One can recognise a Protein kinase domain in the interval 453–711 (LEIIATLGVG…INDIKKHRWL (259 aa)). Residues 459-467 (LGVGGFGRV) and Lys-482 each bind ATP. The active-site Proton acceptor is the Asp-576. Thr-609 carries the post-translational modification Phosphothreonine. The AGC-kinase C-terminal domain maps to 712-762 (NGFNWEGLKARSLPSPLRRELSGPIDHSYFDKYPPEKGVPPDEMSGWDKDF). Positions 740 to 762 (YFDKYPPEKGVPPDEMSGWDKDF) are disordered.

Belongs to the protein kinase superfamily. AGC Ser/Thr protein kinase family. cGMP subfamily. As to quaternary structure, interacts with GRIA1/GLUR1. Myristoylation mediates membrane localization. As to expression, highly expressed in intestinal mucosa and is 20 times less abundant in brain and kidney. Expressed in jejunum, in the apical domain of the villus epithelium.

Its subcellular location is the apical cell membrane. The protein resides in the cell membrane. It catalyses the reaction L-seryl-[protein] + ATP = O-phospho-L-seryl-[protein] + ADP + H(+). It carries out the reaction L-threonyl-[protein] + ATP = O-phospho-L-threonyl-[protein] + ADP + H(+). Binding of cGMP results in enzyme activation. Crucial regulator of intestinal secretion and bone growth. Phosphorylates and activates CFTR on the plasma membrane. Plays a key role in intestinal secretion by regulating cGMP-dependent translocation of CFTR in jejunum. Acts downstream of NMDAR to activate the plasma membrane accumulation of GRIA1/GLUR1 in synapse and increase synaptic plasticity. Phosphorylates GRIA1/GLUR1 at Ser-863. Acts as regulator of gene expression and activator of the extracellular signal-regulated kinases MAPK3/ERK1 and MAPK1/ERK2 in mechanically stimulated osteoblasts. Under fluid shear stress, mediates ERK activation and subsequent induction of FOS, FOSL1/FRA1, FOSL2/FRA2 and FOSB that play a key role in the osteoblast anabolic response to mechanical stimulation. The chain is cGMP-dependent protein kinase 2 (Prkg2) from Rattus norvegicus (Rat).